The primary structure comprises 176 residues: Ribosome maturation factor RimM (176 aa).

The region spanning 97–176 is the PRC barrel domain; sequence DNDFYHRDLI…QIVVDWDPDF (80 aa).

This sequence belongs to the RimM family. In terms of assembly, binds ribosomal protein uS19.

It is found in the cytoplasm. Its function is as follows. An accessory protein needed during the final step in the assembly of 30S ribosomal subunit, possibly for assembly of the head region. Essential for efficient processing of 16S rRNA. May be needed both before and after RbfA during the maturation of 16S rRNA. It has affinity for free ribosomal 30S subunits but not for 70S ribosomes. The protein is Ribosome maturation factor RimM of Shewanella denitrificans (strain OS217 / ATCC BAA-1090 / DSM 15013).